The following is a 219-amino-acid chain: Cyclin-U4-3 (219 aa).

This sequence belongs to the cyclin family. Cyclin U/P subfamily. Interacts with CDKA-1. Expressed at low levels in roots, stems and flowers. Expressed in the shoot apex, leaf primordia and young leaves.

In Arabidopsis thaliana (Mouse-ear cress), this protein is Cyclin-U4-3 (CYCU4-3).